A 357-amino-acid chain; its full sequence is DNA polymerase IV (357 aa).

The region spanning 4–185 (IIHVDMDCYF…LSLRQIPGVG (182 aa)) is the UmuC domain. Positions 8 and 103 each coordinate Mg(2+). Residue glutamate 104 is part of the active site.

The protein belongs to the DNA polymerase type-Y family. As to quaternary structure, monomer. Mg(2+) serves as cofactor.

The protein localises to the cytoplasm. The enzyme catalyses DNA(n) + a 2'-deoxyribonucleoside 5'-triphosphate = DNA(n+1) + diphosphate. In terms of biological role, poorly processive, error-prone DNA polymerase involved in untargeted mutagenesis. Copies undamaged DNA at stalled replication forks, which arise in vivo from mismatched or misaligned primer ends. These misaligned primers can be extended by PolIV. Exhibits no 3'-5' exonuclease (proofreading) activity. May be involved in translesional synthesis, in conjunction with the beta clamp from PolIII. The polypeptide is DNA polymerase IV (Shewanella oneidensis (strain ATCC 700550 / JCM 31522 / CIP 106686 / LMG 19005 / NCIMB 14063 / MR-1)).